Here is a 119-residue protein sequence, read N- to C-terminus: Large ribosomal subunit protein bL20 (119 aa).

It belongs to the bacterial ribosomal protein bL20 family.

Binds directly to 23S ribosomal RNA and is necessary for the in vitro assembly process of the 50S ribosomal subunit. It is not involved in the protein synthesizing functions of that subunit. The protein is Large ribosomal subunit protein bL20 of Clostridium tetani (strain Massachusetts / E88).